A 132-amino-acid chain; its full sequence is uncharacterized protein (132 aa).

3 consecutive transmembrane segments (helical) span residues 18-38 (MLFI…FIGI), 50-70 (IIYF…GVFI), and 71-91 (VVPL…LYLI).

It localises to the cell membrane. This is an uncharacterized protein from Bacillus subtilis (strain 168).